Here is a 281-residue protein sequence, read N- to C-terminus: Merozoite surface protein 1 (281 aa).

Positions 1–19 are cleaved as a signal peptide; it reads MKIIFFLCSFLFFIINTQC. The segment covering 63–100 has biased composition (low complexity); the sequence is ASAQSGASAQSGASAQSGASAQSGTSGPSGPSGTSPSS. The segment at 63–126 is disordered; the sequence is ASAQSGASAQ…PADASDSDAK (64 aa). The segment covering 101 to 110 has biased composition (polar residues); the sequence is RSNTLPRSNT. N-linked (GlcNAc...) asparagine glycosylation occurs at N109. Positions 111–120 are enriched in low complexity; the sequence is SSGASPPADA. An N-linked (GlcNAc...) asparagine glycan is attached at N248.

As to quaternary structure, forms a complex composed of subunits p83, p30, p38, and p42 which remain non-covalently associated; the complex is formed at the merozoite surface prior to egress from host erythrocytes. Forms a complex composed of processed MSP1 subunits, MSP6 subunit p36 and MSP7; the complex is formed at the merozoite surface prior to egress from host erythrocytes. Within the complex, interacts (via subunit p38) with MSP6 subunit p36 and (via subunits p83, p30 and p38) with MSP7 (via subunit p22). Forms a complex composed of MSP1, MSP6, DBLMSP1 and DBLMSP2. Within the complex, interacts (via subunit p38) with DBLMSP1 and DBLMSP2. Forms a complex composed of MSP1, and rhoptry proteins RhopH3, RAP1 and CLAG9/RhopH3. Within the complex, interacts (via subunits p42 and p19) with RhopH3 (via C-terminus). Forms a complex composed of MSP1, MSP6, MSP7, MSP9 and MSP3; within the complex, MSP6 and MSP9 mediate the binding to the host erythrocyte. Interacts (via subunits p19 and p42) with MSP9; the interaction is direct; MSP1 subunits p19 or p42, and MSP9 form a co-ligand complex that interacts with host SLC4A1/Band 3 protein. May interact with PFD6. Interacts with host spectrin. In terms of processing, the p190 precursor is cleaved by SUB1 prior to merozoite egress into 4 subunits p83, p30, p38, and p42 which remain non-covalently associated. SUB1-mediated proteolytic cleavage occurs in an orderly manner; the first cleavage occurs at the p30/p38 site, followed by cleavage at the p83/p30 site, the last cleavage occurs at the p38/p42 site. The order of cleavage is essential for parasite viability. SUB1-mediated processing is essential for merozoite egress. In a second processing step during erythrocyte invasion, p42 is cleaved by SUB2 into p33 and p19; the latter remains attached to the merozoite surface via its GPI-anchor and is endocytosed during the subsequent ring stage.

Its subcellular location is the cell membrane. The protein localises to the secreted. In terms of biological role, during the asexual blood stage, involved in merozoite egress from host erythrocytes possibly via its interaction with the host cytoskeleton protein spectrin resulting in the destabilization of the host cytoskeleton and thus leading to erythrocyte cell membrane rupture. Involved in the binding to host erythrocytes and is required for host erythrocyte invasion. The sequence is that of Merozoite surface protein 1 from Plasmodium falciparum (isolate NF7 / Ghana).